Reading from the N-terminus, the 167-residue chain is NAD(P)H-quinone oxidoreductase subunit I, chloroplastic (167 aa).

4Fe-4S ferredoxin-type domains follow at residues 55-84 and 95-124; these read GRIHFEFDKCIACEVCVRVCPINLPVVDWI and KNYSIDFGVCIFCGNCVEYCPTNCLSMTEE. [4Fe-4S] cluster contacts are provided by C64, C67, C70, C74, C104, C107, C110, and C114.

Belongs to the complex I 23 kDa subunit family. In terms of assembly, NDH is composed of at least 16 different subunits, 5 of which are encoded in the nucleus. The cofactor is [4Fe-4S] cluster.

It localises to the plastid. The protein localises to the chloroplast thylakoid membrane. It carries out the reaction a plastoquinone + NADH + (n+1) H(+)(in) = a plastoquinol + NAD(+) + n H(+)(out). The enzyme catalyses a plastoquinone + NADPH + (n+1) H(+)(in) = a plastoquinol + NADP(+) + n H(+)(out). NDH shuttles electrons from NAD(P)H:plastoquinone, via FMN and iron-sulfur (Fe-S) centers, to quinones in the photosynthetic chain and possibly in a chloroplast respiratory chain. The immediate electron acceptor for the enzyme in this species is believed to be plastoquinone. Couples the redox reaction to proton translocation, and thus conserves the redox energy in a proton gradient. This chain is NAD(P)H-quinone oxidoreductase subunit I, chloroplastic, found in Adiantum capillus-veneris (Maidenhair fern).